A 736-amino-acid chain; its full sequence is Catalase-1 (736 aa).

The tract at residues 1–29 (MSNIISQAGQKAKEALTSAPSSKKVDDLK) is disordered. Residue Arg-89 coordinates heme. Residue His-92 is part of the active site. Arg-129 provides a ligand contact to heme. Asn-165 is an active-site residue. Phe-178, Arg-375, Tyr-379, and Arg-386 together coordinate heme. The segment at residues 356-379 (CTSHVVNGIGFSDDPLLQGRNFSY) is a cross-link (3-(S-cysteinyl)-tyrosine (Cys-Tyr)).

The protein belongs to the catalase family. In terms of assembly, homotetramer. It depends on heme as a cofactor. Post-translationally, glycosylated; with alpha-glucose and/or alpha-mannose.

Its subcellular location is the secreted. It localises to the cell wall. It catalyses the reaction 2 H2O2 = O2 + 2 H2O. Its function is as follows. Occurs in almost all aerobically respiring organisms and serves to protect cells from the toxic effects of hydrogen peroxide. This Neurospora crassa (strain ATCC 24698 / 74-OR23-1A / CBS 708.71 / DSM 1257 / FGSC 987) protein is Catalase-1 (cat-1).